Reading from the N-terminus, the 1338-residue chain is Serine/threonine-protein kinase cek1 (1338 aa).

The PAS domain maps to 28-98; sequence SKDENLQPSI…RAVNCLLKDD (71 aa). Positions 484–554 are disordered; it reads PDFAIGSPMS…GRSSLFSRGR (71 aa). Residues 491–501 show a composition bias toward polar residues; it reads PMSQDSSNYSS. At Ser525 the chain carries Phosphoserine. Positions 541-550 are enriched in polar residues; sequence PASNGRSSLF. The Protein kinase domain occupies 589 to 958; sequence YKILKPISKG…VEEIKAHPFF (370 aa). ATP contacts are provided by residues 595-603 and Lys618; that span reads ISKGAFGSV. Asp713 serves as the catalytic Proton acceptor. A Phosphoserine modification is found at Ser748. Residues 813-842 show a composition bias toward polar residues; that stretch reads ENSAEDSPTATNTPTSQVDESNIFRSTDSP. Disordered regions lie at residues 813 to 844, 1010 to 1035, and 1159 to 1185; these read ENSA…SPRV, KLEE…LRSN, and SSTM…TSSD. The AGC-kinase C-terminal domain occupies 959 to 1057; that stretch reads KSVNWDTILE…RNLDFLNKAN (99 aa). Residues 1159–1174 show a composition bias toward low complexity; it reads SSTMSASQSQSSMHTA. Ser1211 carries the phosphoserine modification.

Belongs to the protein kinase superfamily. Ser/Thr protein kinase family.

It catalyses the reaction L-seryl-[protein] + ATP = O-phospho-L-seryl-[protein] + ADP + H(+). The catalysed reaction is L-threonyl-[protein] + ATP = O-phospho-L-threonyl-[protein] + ADP + H(+). In terms of biological role, may facilitate the progression of anaphase through direct or indirect interaction with the cut8 protein. This chain is Serine/threonine-protein kinase cek1 (cek1), found in Schizosaccharomyces pombe (strain 972 / ATCC 24843) (Fission yeast).